The following is a 466-amino-acid chain: ATP-dependent protease ATPase subunit HslU (466 aa).

ATP-binding positions include I18, 60–65 (GVGKTE), D279, E344, and R416.

Belongs to the ClpX chaperone family. HslU subfamily. A double ring-shaped homohexamer of HslV is capped on each side by a ring-shaped HslU homohexamer. The assembly of the HslU/HslV complex is dependent on binding of ATP.

Its subcellular location is the cytoplasm. ATPase subunit of a proteasome-like degradation complex; this subunit has chaperone activity. The binding of ATP and its subsequent hydrolysis by HslU are essential for unfolding of protein substrates subsequently hydrolyzed by HslV. HslU recognizes the N-terminal part of its protein substrates and unfolds these before they are guided to HslV for hydrolysis. The sequence is that of ATP-dependent protease ATPase subunit HslU from Syntrophomonas wolfei subsp. wolfei (strain DSM 2245B / Goettingen).